The sequence spans 1230 residues: ATP-dependent helicase/nuclease subunit A (1230 aa).

Positions 3–473 (TKFTKNQQRA…IDLADNFRSQ (471 aa)) constitute a UvrD-like helicase ATP-binding domain. 24-31 (ASAGSGKT) serves as a coordination point for ATP. Residues 500-782 (EAKLVPKAAY…RIMTIHASKG (283 aa)) enclose the UvrD-like helicase C-terminal domain.

It belongs to the helicase family. AddA subfamily. As to quaternary structure, heterodimer of AddA and AddB/RexB. Requires Mg(2+) as cofactor.

The catalysed reaction is Couples ATP hydrolysis with the unwinding of duplex DNA by translocating in the 3'-5' direction.. The enzyme catalyses ATP + H2O = ADP + phosphate + H(+). In terms of biological role, the heterodimer acts as both an ATP-dependent DNA helicase and an ATP-dependent, dual-direction single-stranded exonuclease. Recognizes the chi site generating a DNA molecule suitable for the initiation of homologous recombination. The AddA nuclease domain is required for chi fragment generation; this subunit has the helicase and 3' -&gt; 5' nuclease activities. The polypeptide is ATP-dependent helicase/nuclease subunit A (Leuconostoc mesenteroides subsp. mesenteroides (strain ATCC 8293 / DSM 20343 / BCRC 11652 / CCM 1803 / JCM 6124 / NCDO 523 / NBRC 100496 / NCIMB 8023 / NCTC 12954 / NRRL B-1118 / 37Y)).